Consider the following 65-residue polypeptide: Large ribosomal subunit protein bL35 (65 aa).

It belongs to the bacterial ribosomal protein bL35 family.

The protein is Large ribosomal subunit protein bL35 of Chlorobium phaeovibrioides (strain DSM 265 / 1930) (Prosthecochloris vibrioformis (strain DSM 265)).